The primary structure comprises 179 residues: Large ribosomal subunit protein uL6 (179 aa).

It belongs to the universal ribosomal protein uL6 family. In terms of assembly, part of the 50S ribosomal subunit.

In terms of biological role, this protein binds to the 23S rRNA, and is important in its secondary structure. It is located near the subunit interface in the base of the L7/L12 stalk, and near the tRNA binding site of the peptidyltransferase center. In Mycobacterium tuberculosis (strain ATCC 25618 / H37Rv), this protein is Large ribosomal subunit protein uL6.